The primary structure comprises 140 residues: Nucleoside diphosphate kinase (140 aa).

The ATP site is built by Lys9, Phe57, Arg85, Thr91, Arg102, and Asn112. The active-site Pros-phosphohistidine intermediate is the His115.

The protein belongs to the NDK family. In terms of assembly, homotetramer. Requires Mg(2+) as cofactor.

The protein resides in the cytoplasm. It carries out the reaction a 2'-deoxyribonucleoside 5'-diphosphate + ATP = a 2'-deoxyribonucleoside 5'-triphosphate + ADP. The enzyme catalyses a ribonucleoside 5'-diphosphate + ATP = a ribonucleoside 5'-triphosphate + ADP. Functionally, major role in the synthesis of nucleoside triphosphates other than ATP. The ATP gamma phosphate is transferred to the NDP beta phosphate via a ping-pong mechanism, using a phosphorylated active-site intermediate. This chain is Nucleoside diphosphate kinase, found in Chlorobium luteolum (strain DSM 273 / BCRC 81028 / 2530) (Pelodictyon luteolum).